We begin with the raw amino-acid sequence, 890 residues long: Translation initiation factor IF-2 (890 aa).

A disordered region spans residues Leu45–Gln304. Positions Ser67–Val81 are enriched in polar residues. Over residues Val92–Asp217 the composition is skewed to basic and acidic residues. Basic residues predominate over residues Gly252 to Asn266. Over residues Lys267 to Ala280 the composition is skewed to basic and acidic residues. The region spanning Pro389–Lys558 is the tr-type G domain. The segment at Gly398–Thr405 is G1. Gly398–Thr405 contributes to the GTP binding site. Residues Gly423–His427 form a G2 region. A G3 region spans residues Asp444–Gly447. GTP-binding positions include Asp444–His448 and Asn498–Asp501. Positions Asn498–Asp501 are G4. Residues Ser534–Lys536 form a G5 region. The residue at position 808 (Lys808) is an N6-acetyllysine.

The protein belongs to the TRAFAC class translation factor GTPase superfamily. Classic translation factor GTPase family. IF-2 subfamily.

The protein resides in the cytoplasm. One of the essential components for the initiation of protein synthesis. Protects formylmethionyl-tRNA from spontaneous hydrolysis and promotes its binding to the 30S ribosomal subunits. Also involved in the hydrolysis of GTP during the formation of the 70S ribosomal complex. The protein is Translation initiation factor IF-2 of Escherichia coli O127:H6 (strain E2348/69 / EPEC).